A 248-amino-acid chain; its full sequence is Conoporin-Cn1 (248 aa).

Residues 1-23 form the signal peptide; the sequence is MGVQFPALKTMVTVFLLLMGNMS. The segment at 45–64 is N-terminal region; it reads TPGSSLYGVALKDLADTSYN. Phosphocholine is bound by residues glycine 120, serine 138, proline 140, tyrosine 167, and tyrosine 171.

Belongs to the actinoporin family. Conoidea subfamily. In terms of assembly, octamer or nonamer in membranes. Monomer in the soluble state. In terms of processing, 9 isoforms are detected in the injectable venom, mainly corresponding to different oxidative states. Expressed by the venom duct.

The protein resides in the secreted. It is found in the nematocyst. It localises to the target cell membrane. In terms of biological role, pore-forming protein that forms pores of around 1 nm and causes cardiac stimulation and cytolysis. This Conus consors (Singed cone) protein is Conoporin-Cn1.